The chain runs to 90 residues: Putative septation protein SpoVG (90 aa).

It belongs to the SpoVG family.

Functionally, could be involved in septation. In Clostridium perfringens (strain ATCC 13124 / DSM 756 / JCM 1290 / NCIMB 6125 / NCTC 8237 / Type A), this protein is Putative septation protein SpoVG.